Consider the following 786-residue polypeptide: Ciliated left-right organizer ZP-N domains-containing protein (786 aa).

Residues 1–18 form the signal peptide; it reads MWGSVAVVWAICLACIQP.

In terms of tissue distribution, expressed specifically by cells of the ciliated left-right organizer.

Its function is as follows. Plays a role in left-right patterning process. The chain is Ciliated left-right organizer ZP-N domains-containing protein (Ciroz) from Mus musculus (Mouse).